A 287-amino-acid chain; its full sequence is MAAKIIDGKTIAQQVKDEVAARVTQRLAAGKRAPGLAVVLVGENPASQIYVSSKRKVCEEVGFISRSYDLPATTTESELLTLIDQLNADQAIDGILVQLPLPEGIDNTKVIERIAPSKDVDGFHPYNVGRLCQRAPLLRACTPRGIVTLLERYNIDTFGLNAVVVGASNIVGRPMSLELLLAGCTTTVTHRFTKNLRHHIENADLLVVAVGKPGFIPGEWIKPGAIVLDVGINRLESGKVVGDVEFETAQERASYISPVPGGVGPMTVATLIQNTLQACEEYHDHAE.

Residues 166–168 and Ile-232 each bind NADP(+); that span reads GAS.

Belongs to the tetrahydrofolate dehydrogenase/cyclohydrolase family. As to quaternary structure, homodimer.

The catalysed reaction is (6R)-5,10-methylene-5,6,7,8-tetrahydrofolate + NADP(+) = (6R)-5,10-methenyltetrahydrofolate + NADPH. The enzyme catalyses (6R)-5,10-methenyltetrahydrofolate + H2O = (6R)-10-formyltetrahydrofolate + H(+). It functions in the pathway one-carbon metabolism; tetrahydrofolate interconversion. Functionally, catalyzes the oxidation of 5,10-methylenetetrahydrofolate to 5,10-methenyltetrahydrofolate and then the hydrolysis of 5,10-methenyltetrahydrofolate to 10-formyltetrahydrofolate. The sequence is that of Bifunctional protein FolD from Pectobacterium carotovorum subsp. carotovorum (strain PC1).